Consider the following 1119-residue polypeptide: Period circadian protein homolog 3 (1119 aa).

The tract at residues 1–48 (MDPCGNPAVPGGDCPQTRGPGLQGSSGQEGPLQGICVDSSHSEHEDRN) is disordered. The Nuclear export signal 1 motif lies at 54–63 (LIMVVQEMKK). PAS domains lie at 120-187 (LASE…PTQL) and 259-325 (YEAP…KVLK). The 44-residue stretch at 334 to 377 (HSPIRFCTQNGDYVILDSSWSSFVNPWSRKVSFIIGRHKVRTSP) folds into the PAC domain. Residues 400-409 (LQEQIHRLLL) carry the Nuclear export signal 3 motif. Low complexity predominate over residues 419-428 (GYGSLGSSGS). 4 disordered regions span residues 419–449 (GYGS…VEEA), 483–530 (VKPV…SSSY), 718–744 (HSRC…SSSS), and 878–910 (LEPT…SRSS). Polar residues-rich tracts occupy residues 429–442 (QEQH…SESS) and 491–515 (TEPQ…STDT). Positions 551 to 750 (LKRKCISCTN…SSSSAHLCPH (200 aa)) are CSNK1E binding domain. The Nuclear localization signal motif lies at 720–739 (RCAGSERRKHKRKKLPTPVD). The span at 885 to 903 (HGPRRVEENWETHSEEEHP) shows a compositional bias: basic and acidic residues. The residue at position 907 (S907) is a Phosphoserine. Positions 913-920 (LQLNLLQE) match the Nuclear export signal 2 motif. The interval 947–1011 (GNSGSRSPPC…QDTHRDRAFS (65 aa)) is disordered. A compositionally biased stretch (low complexity) spans 970–988 (SPSAAASGSSASSVHGSGS). A compositionally biased stretch (polar residues) spans 989 to 1001 (DYTSEVSENGQRS). The tract at residues 1037–1119 (ERGRDTVLRE…VQQKTPVEQL (83 aa)) is CRY binding domain.

As to quaternary structure, homodimer. Component of the circadian core oscillator, which includes the CRY proteins, CLOCK or NPAS2, BMAL1 or BMAL2, CSNK1D and/or CSNK1E, TIMELESS and the PER proteins. Interacts directly with PER1, PER2, CRY1, CRY2, and TIMELESS; interaction with CRY1 and CRY2 is weak and not rhythmic. Interacts with FBXW11 and BTRC. Post-translationally, phosphorylation by CSNK1E is weak and appears to require association with PER1 and translocation to the nucleus. In terms of processing, ubiquitinated.

The protein localises to the cytoplasm. Its subcellular location is the nucleus. Functionally, originally described as a core component of the circadian clock. The circadian clock, an internal time-keeping system, regulates various physiological processes through the generation of approximately 24 hour circadian rhythms in gene expression, which are translated into rhythms in metabolism and behavior. It is derived from the Latin roots 'circa' (about) and 'diem' (day) and acts as an important regulator of a wide array of physiological functions including metabolism, sleep, body temperature, blood pressure, endocrine, immune, cardiovascular, and renal function. Consists of two major components: the central clock, residing in the suprachiasmatic nucleus (SCN) of the brain, and the peripheral clocks that are present in nearly every tissue and organ system. Both the central and peripheral clocks can be reset by environmental cues, also known as Zeitgebers (German for 'timegivers'). The predominant Zeitgeber for the central clock is light, which is sensed by retina and signals directly to the SCN. The central clock entrains the peripheral clocks through neuronal and hormonal signals, body temperature and feeding-related cues, aligning all clocks with the external light/dark cycle. Circadian rhythms allow an organism to achieve temporal homeostasis with its environment at the molecular level by regulating gene expression to create a peak of protein expression once every 24 hours to control when a particular physiological process is most active with respect to the solar day. Transcription and translation of core clock components (CLOCK, NPAS2, BMAL1, BMAL2, PER1, PER2, PER3, CRY1 and CRY2) plays a critical role in rhythm generation, whereas delays imposed by post-translational modifications (PTMs) are important for determining the period (tau) of the rhythms (tau refers to the period of a rhythm and is the length, in time, of one complete cycle). A diurnal rhythm is synchronized with the day/night cycle, while the ultradian and infradian rhythms have a period shorter and longer than 24 hours, respectively. Disruptions in the circadian rhythms contribute to the pathology of cardiovascular diseases, cancer, metabolic syndromes and aging. A transcription/translation feedback loop (TTFL) forms the core of the molecular circadian clock mechanism. Transcription factors, CLOCK or NPAS2 and BMAL1 or BMAL2, form the positive limb of the feedback loop, act in the form of a heterodimer and activate the transcription of core clock genes and clock-controlled genes (involved in key metabolic processes), harboring E-box elements (5'-CACGTG-3') within their promoters. The core clock genes: PER1/2/3 and CRY1/2 which are transcriptional repressors form the negative limb of the feedback loop and interact with the CLOCK|NPAS2-BMAL1|BMAL2 heterodimer inhibiting its activity and thereby negatively regulating their own expression. This heterodimer also activates nuclear receptors NR1D1, NR1D2, RORA, RORB and RORG, which form a second feedback loop and which activate and repress BMAL1 transcription, respectively. Has a redundant role with the other PER proteins PER1 and PER2 and is not essential for the circadian rhythms maintenance. In contrast, plays an important role in sleep-wake timing and sleep homeostasis probably through the transcriptional regulation of sleep homeostasis-related genes, without influencing circadian parameters. Can bind heme. In Rattus norvegicus (Rat), this protein is Period circadian protein homolog 3 (Per3).